We begin with the raw amino-acid sequence, 230 residues long: Large ribosomal subunit protein uL1 (230 aa).

This sequence belongs to the universal ribosomal protein uL1 family. As to quaternary structure, part of the 50S ribosomal subunit.

Binds directly to 23S rRNA. The L1 stalk is quite mobile in the ribosome, and is involved in E site tRNA release. Functionally, protein L1 is also a translational repressor protein, it controls the translation of the L11 operon by binding to its mRNA. This Nitrosomonas europaea (strain ATCC 19718 / CIP 103999 / KCTC 2705 / NBRC 14298) protein is Large ribosomal subunit protein uL1.